The sequence spans 433 residues: Adenylosuccinate synthetase (433 aa).

Residues 13-19 (GDEGKGK) and 41-43 (GHT) each bind GTP. The active-site Proton acceptor is aspartate 14. The Mg(2+) site is built by aspartate 14 and glycine 41. IMP contacts are provided by residues 14–17 (DEGK), 39–42 (NAGH), threonine 130, arginine 144, glutamine 225, threonine 240, and arginine 304. Histidine 42 acts as the Proton donor in catalysis. 300–306 (STTGRKR) contributes to the substrate binding site. Residues arginine 306, 332 to 334 (KLD), and 414 to 416 (STG) contribute to the GTP site.

The protein belongs to the adenylosuccinate synthetase family. In terms of assembly, homodimer. It depends on Mg(2+) as a cofactor.

The protein localises to the cytoplasm. It catalyses the reaction IMP + L-aspartate + GTP = N(6)-(1,2-dicarboxyethyl)-AMP + GDP + phosphate + 2 H(+). It participates in purine metabolism; AMP biosynthesis via de novo pathway; AMP from IMP: step 1/2. Functionally, plays an important role in the de novo pathway of purine nucleotide biosynthesis. Catalyzes the first committed step in the biosynthesis of AMP from IMP. The protein is Adenylosuccinate synthetase of Buchnera aphidicola subsp. Acyrthosiphon pisum (strain APS) (Acyrthosiphon pisum symbiotic bacterium).